A 257-amino-acid chain; its full sequence is Insulin-induced gene 1 protein (257 aa).

Topologically, residues 1 to 64 (MPRLHDHVWS…ARPGSWHHDL (64 aa)) are cytoplasmic. A disordered region spans residues 32–54 (CPQGSGAPEPAPRSPRAGTAGCG). A helical transmembrane segment spans residues 65–87 (VQRSLVLFSFGVVLALVLNLLQI). Topologically, residues 88-106 (QRNVTLFPDEVIATIFSSA) are extracellular. Residues 107-124 (WWVPPCCGTAAAVVGLLY) form a helical membrane-spanning segment. The Cytoplasmic segment spans residues 125 to 139 (PCIDSHLGEPHKFKR). Glycyl lysine isopeptide (Lys-Gly) (interchain with G-Cter in ubiquitin) cross-links involve residues K136 and K138. A helical transmembrane segment spans residues 140–162 (EWASVMRCIAVFVGINHASAKLD). Residues 163–165 (FAN) are Extracellular-facing. A helical transmembrane segment spans residues 166 to 184 (NVQLSLTLAALSLGLWWTF). Residues 185-189 (DRSRS) are Cytoplasmic-facing. S187 carries the phosphoserine modification. Residues 190-211 (GLGLGITIAFLATLITQFLVYN) traverse the membrane as a helical segment. At 212–225 (GVYQYTSPDFLYIR) the chain is on the extracellular side. The chain crosses the membrane as a helical span at residues 226–243 (SWLPCIFFSGGVTVGNIG). The Cytoplasmic portion of the chain corresponds to 244–257 (RQLAMGVPEKPHSD). The KxHxx motif lies at 251–257 (PEKPHSD).

This sequence belongs to the INSIG family. In terms of assembly, interacts with SCAP; interaction is direct and only takes place in the presence of sterols; it prevents interaction between SCAP and the coat protein complex II (COPII). Associates with the SCAP-SREBP complex (composed of SCAP and SREBF1/SREBP1 or SREBF2/SREBP2); association is mediated via its interaction with SCAP and only takes place in the presence of sterols. Interaction with SCAP is mutually exclusive with PAQR3. Interacts with HMGCR (via its SSD); the interaction, accelerated by sterols, leads to the recruitment of HMGCR to AMFR/gp78 for its ubiquitination by the sterol-mediated ERAD pathway. Interacts with AMFR/gp78 (via its membrane domain); the interaction recruits HMCR at the ER membrane for its ubiquitination and degradation by the sterol-mediated ERAD pathway. Interacts with SOAT2/ACAT2; leading to promote recruitment of AMFR/gp78 and subsequent ubiquitination of SOAT2/ACAT2. Interacts with RNF139. Interacts with RNF145. Post-translationally, phosphorylation at Ser-187 by PCK1 reduces binding to oxysterol, disrupting the interaction between INSIG1 and SCAP, thereby promoting nuclear translocation of SREBP proteins (SREBF1/SREBP1 or SREBF2/SREBP2) and subsequent transcription of downstream lipogenesis-related genes. In terms of processing, ubiquitinated by AMFR/gp78 in response to sterol deprivation, leading to its degradation: when the SCAP-SREBP complex becomes dissociated from INSIG1, INSIG1 is then ubiquitinated and degraded in proteasomes. Although ubiquitination is required for rapid INSIG1 degradation, it is not required for release of the SCAP-SREBP complex. Ubiquitinated by RNF139.

It is found in the endoplasmic reticulum membrane. Functionally, oxysterol-binding protein that mediates feedback control of cholesterol synthesis by controlling both endoplasmic reticulum to Golgi transport of SCAP and degradation of HMGCR. Acts as a negative regulator of cholesterol biosynthesis by mediating the retention of the SCAP-SREBP complex in the endoplasmic reticulum, thereby blocking the processing of sterol regulatory element-binding proteins (SREBPs) SREBF1/SREBP1 and SREBF2/SREBP2. Binds oxysterol, including 25-hydroxycholesterol, regulating interaction with SCAP and retention of the SCAP-SREBP complex in the endoplasmic reticulum. In presence of oxysterol, interacts with SCAP, retaining the SCAP-SREBP complex in the endoplasmic reticulum, thereby preventing SCAP from escorting SREBF1/SREBP1 and SREBF2/SREBP2 to the Golgi. Sterol deprivation or phosphorylation by PCK1 reduce oxysterol-binding, disrupting the interaction between INSIG1 and SCAP, thereby promoting Golgi transport of the SCAP-SREBP complex, followed by processing and nuclear translocation of SREBF1/SREBP1 and SREBF2/SREBP2. Also regulates cholesterol synthesis by regulating degradation of HMGCR: initiates the sterol-mediated ubiquitin-mediated endoplasmic reticulum-associated degradation (ERAD) of HMGCR via recruitment of the reductase to the ubiquitin ligases AMFR/gp78 and/or RNF139. Also regulates degradation of SOAT2/ACAT2 when the lipid levels are low: initiates the ubiquitin-mediated degradation of SOAT2/ACAT2 via recruitment of the ubiquitin ligases AMFR/gp78. This Cricetulus griseus (Chinese hamster) protein is Insulin-induced gene 1 protein.